Consider the following 262-residue polypeptide: Ribosomal RNA small subunit methyltransferase A (262 aa).

6 residues coordinate S-adenosyl-L-methionine: N14, L16, G41, E63, D85, and N105.

The protein belongs to the class I-like SAM-binding methyltransferase superfamily. rRNA adenine N(6)-methyltransferase family. RsmA subfamily.

It is found in the cytoplasm. It catalyses the reaction adenosine(1518)/adenosine(1519) in 16S rRNA + 4 S-adenosyl-L-methionine = N(6)-dimethyladenosine(1518)/N(6)-dimethyladenosine(1519) in 16S rRNA + 4 S-adenosyl-L-homocysteine + 4 H(+). Functionally, specifically dimethylates two adjacent adenosines (A1518 and A1519) in the loop of a conserved hairpin near the 3'-end of 16S rRNA in the 30S particle. May play a critical role in biogenesis of 30S subunits. The chain is Ribosomal RNA small subunit methyltransferase A from Maridesulfovibrio salexigens (strain ATCC 14822 / DSM 2638 / NCIMB 8403 / VKM B-1763) (Desulfovibrio salexigens).